The following is an 854-amino-acid chain: Arsenate respiratory reductase molybdopterin-containing subunit ArrA (854 aa).

The segment at residues 1–41 (MKKENQVNLGRRQLLKSTAAGTVLTGIGGTLSFTPIVEGIA) is a signal peptide (tat-type signal). The 4Fe-4S Mo/W bis-MGD-type domain occupies 54–110 (GEWLATTCQGCTSWCAKQIYVMDGRALKVRGNPNSGVHGMSSCPRQHLSLQQVYDPD). [4Fe-4S] cluster contacts are provided by Cys61, Cys64, Cys68, and Cys96. Residue Arg165 coordinates arsenite. Tyr166 contacts arsenate. Arsenite is bound at residue His189. Ser190 is an arsenate binding site. Cys193 contacts Mo-bis(molybdopterin guanine dinucleotide). Lys198 is a binding site for arsenate. Tyr210 contributes to the arsenite binding site.

It belongs to the prokaryotic molybdopterin-containing oxidoreductase family. Heterodimer composed of one large subunit (ArrA) and one small subunit (ArrB). [4Fe-4S] cluster is required as a cofactor. The cofactor is Mo-bis(molybdopterin guanine dinucleotide). In terms of processing, predicted to be exported by the Tat system. The position of the signal peptide cleavage has not been experimentally proven.

It is found in the periplasm. It catalyses the reaction arsenite + A + H2O = arsenate + AH2 + H(+). Phosphate is a competitive inhibitor. Functionally, component of the arsenate respiratory reductase (Arr) complex, which catalyzes the reduction of arsenate (As(V)) to arsenite (As(III)). ArrA is the arsenate-binding subunit. The periplasmic localization of this complex may allow the cell to couple arsenate reduction to energy production before arsenate can be transported to the cell cytoplasm and enter the ars detoxification pathway, an energy-requiring process. The sequence is that of Arsenate respiratory reductase molybdopterin-containing subunit ArrA from Shewanella sp. (strain ANA-3).